The primary structure comprises 454 residues: UDP-N-acetylmuramoylalanine--D-glutamate ligase (454 aa).

Position 117–123 (117–123 (GTNGKTT)) interacts with ATP.

It belongs to the MurCDEF family.

It localises to the cytoplasm. It catalyses the reaction UDP-N-acetyl-alpha-D-muramoyl-L-alanine + D-glutamate + ATP = UDP-N-acetyl-alpha-D-muramoyl-L-alanyl-D-glutamate + ADP + phosphate + H(+). Its pathway is cell wall biogenesis; peptidoglycan biosynthesis. In terms of biological role, cell wall formation. Catalyzes the addition of glutamate to the nucleotide precursor UDP-N-acetylmuramoyl-L-alanine (UMA). This chain is UDP-N-acetylmuramoylalanine--D-glutamate ligase, found in Alkaliphilus oremlandii (strain OhILAs) (Clostridium oremlandii (strain OhILAs)).